An 858-amino-acid chain; its full sequence is ATP-dependent DNA helicase Q-like SIM (858 aa).

Residues 2-44 enclose the UBA domain; sequence DLSSDQLVMKIVEMGFEKLDALEAVKAVGGKSCDDAVEYILKG. The region spanning 177-353 is the Helicase ATP-binding domain; it reads LSTWVAHKDC…LESLHLSKET (177 aa). 190–197 lines the ATP pocket; that stretch reads AATGSGKS. The DEAH box motif lies at 288–291; the sequence is DEAH. The tract at residues 402–450 is disordered; it reads LAVISRESEEQTDFGSHDSENIHETDYDEDEEDQENSLAKKNSSNGKEL. Basic and acidic residues predominate over residues 416–426; it reads GSHDSENIHET. Acidic residues predominate over residues 427 to 436; that stretch reads DYDEDEEDQE. The segment covering 437 to 448 has biased composition (polar residues); it reads NSLAKKNSSNGK. The 137-residue stretch at 491 to 627 folds into the Helicase C-terminal domain; that stretch reads EKQKDLEGLT…QTEQAYKMLS (137 aa). Residues 822 to 858 are disordered; it reads RQRLERRERKPRRERKPRKKRTRGRSSTKLHPWRSKE. Residues 830–858 are compositionally biased toward basic residues; it reads RKPRRERKPRKKRTRGRSSTKLHPWRSKE.

This sequence belongs to the helicase family. RecQ subfamily. It depends on Mg(2+) as a cofactor. Mn(2+) serves as cofactor. Mostly expressed in roots and seedlings, and, to a lower extent, in leaves, shoots, shoot apical mersitem, inflorescences, flowers, siliques and seeds.

It is found in the nucleus. It catalyses the reaction Couples ATP hydrolysis with the unwinding of duplex DNA by translocating in the 3'-5' direction.. The catalysed reaction is ATP + H2O = ADP + phosphate + H(+). Functionally, plant specific, probable 3'-5' DNA helicase that may play a role in the repair of DNA. This chain is ATP-dependent DNA helicase Q-like SIM (RECQSIM), found in Arabidopsis thaliana (Mouse-ear cress).